Consider the following 353-residue polypeptide: O-antigen chain mannosyltransferase RfbU (353 aa).

Belongs to the glycosyltransferase group 1 family. Glycosyltransferase 4 subfamily.

The catalysed reaction is alpha-L-rhamnosyl-(1-&gt;3)-alpha-D-galactosyl-1-diphospho-di-trans,octa-cis-undecaprenol + GDP-alpha-D-mannose = alpha-D-Man-(1-&gt;4)-alpha-L-Rha-(1-&gt;3)-alpha-D-Gal-di-trans,octa-cis-undecaprenyl diphosphate + GDP + H(+). It functions in the pathway bacterial outer membrane biogenesis; LPS O-antigen biosynthesis. In terms of biological role, mannosyltransferase involved in the biosynthesis of the repeat unit of the lipopolysaccharide (LPS) O-antigen region. Catalyzes the addition of a mannose to the rhamnosyl-galactosyl-undecaprenyl diphosphate intermediate. The protein is O-antigen chain mannosyltransferase RfbU of Salmonella typhimurium (strain LT2 / SGSC1412 / ATCC 700720).